We begin with the raw amino-acid sequence, 946 residues long: Bifunctional lysine-specific demethylase and histidyl-hydroxylase NO66 (946 aa).

The tract at residues 14–435 is disordered; it reads YRGSATSKNY…TSAASKKNTV (422 aa). 2 stretches are compositionally biased toward polar residues: residues 17–28 and 37–46; these read SATSKNYVQKGT and AKNNNRNLAS. A compositionally biased stretch (low complexity) spans 59 to 73; sequence SGSYSDGDNGSSSSS. The span at 99-110 shows a compositional bias: polar residues; that stretch reads TLNNHSSQSSPE. A compositionally biased stretch (basic and acidic residues) spans 117–128; that stretch reads ESLKRRNDEAEG. A compositionally biased stretch (polar residues) spans 169 to 186; sequence TLNSHSSQSSPETPANTR. Residues 187 to 198 show a composition bias toward basic and acidic residues; the sequence is ESLKRRTDEAEG. Over residues 239 to 256 the composition is skewed to polar residues; sequence TLNSHSYQSSPETPANTR. The segment covering 257 to 268 has biased composition (basic and acidic residues); it reads ESLKRRTDEAEG. Threonine 309 carries the phosphothreonine modification. Residues 309 to 327 show a composition bias toward polar residues; that stretch reads TLNSHSSQSSPETPANTRE. The span at 328-338 shows a compositional bias: basic and acidic residues; it reads SLNRRNYEAEG. Serine 339 carries the phosphoserine modification. The span at 379-397 shows a compositional bias: polar residues; sequence TLNSHSSQSSPETPANTRE. Positions 398–408 are enriched in basic and acidic residues; the sequence is SLNRRNYEAEG. Positions 416–433 are enriched in polar residues; it reads RTSSTPVGQSTSAASKKN. The JmjC domain maps to 606 to 742; the sequence is NPSSYLVQLR…NLMEKLMPLV (137 aa). Residues histidine 646, aspartate 648, and histidine 708 each contribute to the Fe cation site.

Belongs to the ROX family. NO66 subfamily. Fe(2+) serves as cofactor.

The protein localises to the nucleus. It carries out the reaction N(6),N(6)-dimethyl-L-lysyl(36)-[histone H3] + 2 2-oxoglutarate + 2 O2 = L-lysyl(36)-[histone H3] + 2 formaldehyde + 2 succinate + 2 CO2. Oxygenase that can act as both a histone lysine demethylase and a ribosomal histidine hydroxylase. Specifically demethylates 'Lys-4' (H3K4me) and 'Lys-36' (H3K36me) of histone H3, thereby playing a central role in histone code. The polypeptide is Bifunctional lysine-specific demethylase and histidyl-hydroxylase NO66 (Drosophila pseudoobscura pseudoobscura (Fruit fly)).